Reading from the N-terminus, the 148-residue chain is Large ribosomal subunit protein bL9 (148 aa).

It belongs to the bacterial ribosomal protein bL9 family.

Functionally, binds to the 23S rRNA. This is Large ribosomal subunit protein bL9 from Bacillus cereus (strain ATCC 10987 / NRS 248).